We begin with the raw amino-acid sequence, 122 residues long: MIQQESRLKVADNSGARELLTIKVLGGSGRKTANIGDIIVATVKQATPGGVVKKGDVVRAVVVRTKRGARRKDGSYIRFDENAAVIIKDDKSPRGTRIFGPVARELREKEFMKIVSLAPEVL.

The protein belongs to the universal ribosomal protein uL14 family. As to quaternary structure, part of the 50S ribosomal subunit. Forms a cluster with proteins L3 and L19. In the 70S ribosome, L14 and L19 interact and together make contacts with the 16S rRNA in bridges B5 and B8.

In terms of biological role, binds to 23S rRNA. Forms part of two intersubunit bridges in the 70S ribosome. The protein is Large ribosomal subunit protein uL14 of Exiguobacterium sp. (strain ATCC BAA-1283 / AT1b).